The chain runs to 379 residues: MPRSSRSPGDPGALLEDVAHNPRPRRIAQRGRNTSRMAEDTSPNMNDNILLPVRNNDQALGLTQCMLGCVSWFTCFACSLRTQAQQVLFNTCRCKLLCQKLMEKTGILLLCAFGFWMFSIHLPSKMKVWQDDSINGPLQSLRLYQEKVRHHSGEIQDLRGSMNQLIAKLQEMEAMSDEQKMAQKIMKMIHGDYIEKPDFALKSIGASIDFEHTSVTYNHEKAHSYWNWIQLWNYAQPPDVILEPNVTPGNCWAFEGDRGQVTIQLAQKVYLSNLTLQHIPKTISLSGSLDTAPKDFVIYGMEGSPKEEVFLGAFQFQPENIIQMFPLQNQPARAFSAVKVKISSNWGNPGFTCLYRVRVHGSVAPPREQPHQNPYPKRD.

Residues 1–45 are disordered; it reads MPRSSRSPGDPGALLEDVAHNPRPRRIAQRGRNTSRMAEDTSPNM. Residues 1-105 lie on the Nuclear side of the membrane; that stretch reads MPRSSRSPGD…LLCQKLMEKT (105 aa). The segment covering 31–45 has biased composition (polar residues); it reads GRNTSRMAEDTSPNM. Residues 106-122 form a helical membrane-spanning segment; the sequence is GILLLCAFGFWMFSIHL. The Perinuclear space portion of the chain corresponds to 123 to 379; that stretch reads PSKMKVWQDD…PHQNPYPKRD (257 aa). The stretch at 141 to 182 forms a coiled coil; the sequence is LRLYQEKVRHHSGEIQDLRGSMNQLIAKLQEMEAMSDEQKMA. Positions 205 to 364 constitute an SUN domain; the sequence is GASIDFEHTS…YRVRVHGSVA (160 aa).

Probable homotrimer. Interacts with DNAJB13. Post-translationally, highly glycosylated in the Golgi apparatus during spermiogenesis. Sperm (at protein level). Widely expressed. Conflictingly shown to be specifically expressed in testis.

It localises to the nucleus inner membrane. The protein localises to the golgi apparatus. Its function is as follows. Plays an essential role in anchoring sperm head to the tail. Is responsible for the attachment of the coupling apparatus to the sperm nuclear envelope. This is SUN domain-containing protein 5 (SUN5) from Homo sapiens (Human).